Reading from the N-terminus, the 617-residue chain is Tetratricopeptide repeat protein 39B (617 aa).

TPR repeat units follow at residues 328–361 and 561–594; these read SLIL…QEEW and PFTL…YKDY.

It belongs to the TTC39 family.

Its function is as follows. Regulates high density lipoprotein (HDL) cholesterol metabolism by promoting the ubiquitination and degradation of the oxysterols receptors LXR (NR1H2 and NR1H3). The sequence is that of Tetratricopeptide repeat protein 39B (Ttc39b) from Rattus norvegicus (Rat).